The sequence spans 55 residues: Large ribosomal subunit protein bL33 (55 aa).

It belongs to the bacterial ribosomal protein bL33 family.

The chain is Large ribosomal subunit protein bL33 from Bordetella avium (strain 197N).